Consider the following 318-residue polypeptide: Biotin synthase (318 aa).

One can recognise a Radical SAM core domain in the interval Leu44–Arg273. Residues Cys62, Cys66, and Cys69 each contribute to the [4Fe-4S] cluster site. Positions 106, 138, 198, and 268 each coordinate [2Fe-2S] cluster.

It belongs to the radical SAM superfamily. Biotin synthase family. In terms of assembly, homodimer. It depends on [4Fe-4S] cluster as a cofactor. The cofactor is [2Fe-2S] cluster.

The enzyme catalyses (4R,5S)-dethiobiotin + (sulfur carrier)-SH + 2 reduced [2Fe-2S]-[ferredoxin] + 2 S-adenosyl-L-methionine = (sulfur carrier)-H + biotin + 2 5'-deoxyadenosine + 2 L-methionine + 2 oxidized [2Fe-2S]-[ferredoxin]. The protein operates within cofactor biosynthesis; biotin biosynthesis; biotin from 7,8-diaminononanoate: step 2/2. Catalyzes the conversion of dethiobiotin (DTB) to biotin by the insertion of a sulfur atom into dethiobiotin via a radical-based mechanism. This chain is Biotin synthase, found in Clostridium botulinum (strain Alaska E43 / Type E3).